The following is a 3380-amino-acid chain: Apolipophorins (3380 aa).

A signal peptide spans 1–21 (MGTPPHIWFLLILAISSGGLS). One can recognise a Vitellogenin domain in the interval 40–646 (YQKGQTYTYS…SQSSYLPRSV (607 aa)). Asn132, Asn649, Asn969, Asn2174, Asn2851, and Asn3177 each carry an N-linked (GlcNAc...) asparagine glycan. The region spanning 2815-2979 (ATAILLNSHH…NAWKVDAQCA (165 aa)) is the VWFD domain. An intrachain disulfide couples Cys2839 to Cys2978.

Post-translationally, cleaved into 2 chains by furin protease. However, prevention of cleavage does not impair its function. In terms of processing, N-glycosylated. In terms of tissue distribution, present in brain, hemolymph, fat body and eyes.

The protein localises to the secreted. Functionally, constitutes the major component of lipophorin, which mediates transport for various types of lipids in hemolymph. Acts by forming lipoprotein particles that bind lipoproteins and lipids. May be required for morphogens wingless (wg) and hedgehog (hh) function, possibly by acting as vehicles for the movement of wg and hh. This Locusta migratoria (Migratory locust) protein is Apolipophorins.